A 121-amino-acid chain; its full sequence is Probable K(+)/H(+) antiporter subunit G (121 aa).

The next 3 membrane-spanning stretches (helical) occupy residues 10–32, 45–67, and 72–94; these read WAALLVCGLMLVGAATTLIGSLG, APTIATSGGTILLCLASILCFAV, and WVFHEVLIIFFVTVTTPVTLMLL.

The protein belongs to the CPA3 antiporters (TC 2.A.63) subunit G family. In terms of assembly, may form a hetero-oligomeric complex that consists of six subunits: PhaAB, PhaC, PhaD, PhaE, PhaF and PhaG.

It localises to the cell membrane. Functionally, part of a K(+) efflux system which is required for the adaptation of R.meliloti to alkaline pH as well as for the infection process during symbiotic nodule development. The chain is Probable K(+)/H(+) antiporter subunit G (phaG) from Rhizobium meliloti (strain 1021) (Ensifer meliloti).